Consider the following 265-residue polypeptide: Glutamate racemase (265 aa).

Substrate is bound by residues 9 to 10 (DS) and 41 to 42 (YG). C72 (proton donor/acceptor) is an active-site residue. 73 to 74 (NT) contacts substrate. C183 serves as the catalytic Proton donor/acceptor. Position 184–185 (184–185 (TH)) interacts with substrate.

It belongs to the aspartate/glutamate racemases family.

It carries out the reaction L-glutamate = D-glutamate. The protein operates within cell wall biogenesis; peptidoglycan biosynthesis. Provides the (R)-glutamate required for cell wall biosynthesis. This Lysinibacillus sphaericus (strain C3-41) protein is Glutamate racemase.